Consider the following 1098-residue polypeptide: Probable arabinosyltransferase B (1098 aa).

The next 12 membrane-spanning stretches (helical) occupy residues 28 to 50 (WVAT…LPVV), 217 to 239 (LKLL…LWRL), 271 to 293 (ASWR…WHVI), 402 to 419 (LRPE…YVLI), 434 to 456 (AVVT…AALV), 472 to 494 (LVGT…TVVF), 541 to 558 (FGFL…FIML), 570 to 587 (PAWR…FLMF), 597 to 619 (GLFA…PSVL), 626 to 648 (MAFL…GWWY), 663 to 685 (IDGI…YAAW), and 698 to 720 (LIRA…VFVA).

The protein belongs to the emb family.

The protein resides in the cell membrane. Arabinosyl transferase responsible for the polymerization of arabinose into the arabinan of arabinogalactan. The protein is Probable arabinosyltransferase B (embB) of Mycobacterium tuberculosis (strain CDC 1551 / Oshkosh).